The primary structure comprises 484 residues: tRNA sulfurtransferase (484 aa).

The THUMP domain maps to 63-167 (ERLVEALKCI…NKDLFIVTQR (105 aa)). ATP-binding positions include 185–186 (LM), Lys267, Gly289, and Gln298. Residues Cys346 and Cys458 are joined by a disulfide bond. The region spanning 406–484 (IPENAVVVDI…GFKNVKVYRP (79 aa)) is the Rhodanese domain. Cys458 acts as the Cysteine persulfide intermediate in catalysis.

The protein belongs to the ThiI family.

Its subcellular location is the cytoplasm. It carries out the reaction [ThiI sulfur-carrier protein]-S-sulfanyl-L-cysteine + a uridine in tRNA + 2 reduced [2Fe-2S]-[ferredoxin] + ATP + H(+) = [ThiI sulfur-carrier protein]-L-cysteine + a 4-thiouridine in tRNA + 2 oxidized [2Fe-2S]-[ferredoxin] + AMP + diphosphate. It catalyses the reaction [ThiS sulfur-carrier protein]-C-terminal Gly-Gly-AMP + S-sulfanyl-L-cysteinyl-[cysteine desulfurase] + AH2 = [ThiS sulfur-carrier protein]-C-terminal-Gly-aminoethanethioate + L-cysteinyl-[cysteine desulfurase] + A + AMP + 2 H(+). It participates in cofactor biosynthesis; thiamine diphosphate biosynthesis. Catalyzes the ATP-dependent transfer of a sulfur to tRNA to produce 4-thiouridine in position 8 of tRNAs, which functions as a near-UV photosensor. Also catalyzes the transfer of sulfur to the sulfur carrier protein ThiS, forming ThiS-thiocarboxylate. This is a step in the synthesis of thiazole, in the thiamine biosynthesis pathway. The sulfur is donated as persulfide by IscS. The polypeptide is tRNA sulfurtransferase (Colwellia psychrerythraea (strain 34H / ATCC BAA-681) (Vibrio psychroerythus)).